We begin with the raw amino-acid sequence, 236 residues long: Purine nucleoside phosphorylase DeoD-type (236 aa).

His5 lines the a purine D-ribonucleoside pocket. Phosphate contacts are provided by residues Gly21, Arg25, Arg44, and 88–91 (RVGS). A purine D-ribonucleoside is bound by residues 180 to 182 (EME) and 204 to 205 (SD). The active-site Proton donor is the Asp205.

This sequence belongs to the PNP/UDP phosphorylase family. As to quaternary structure, homohexamer; trimer of homodimers.

It catalyses the reaction a purine D-ribonucleoside + phosphate = a purine nucleobase + alpha-D-ribose 1-phosphate. It carries out the reaction a purine 2'-deoxy-D-ribonucleoside + phosphate = a purine nucleobase + 2-deoxy-alpha-D-ribose 1-phosphate. Functionally, catalyzes the reversible phosphorolytic breakdown of the N-glycosidic bond in the beta-(deoxy)ribonucleoside molecules, with the formation of the corresponding free purine bases and pentose-1-phosphate. In Psychromonas ingrahamii (strain DSM 17664 / CCUG 51855 / 37), this protein is Purine nucleoside phosphorylase DeoD-type.